The chain runs to 300 residues: Putative S-adenosyl-L-methionine-dependent methyltransferase Mkms_0379 (300 aa).

S-adenosyl-L-methionine-binding positions include aspartate 128 and 157 to 158 (DL).

This sequence belongs to the UPF0677 family.

In terms of biological role, exhibits S-adenosyl-L-methionine-dependent methyltransferase activity. This Mycobacterium sp. (strain KMS) protein is Putative S-adenosyl-L-methionine-dependent methyltransferase Mkms_0379.